A 170-amino-acid polypeptide reads, in one-letter code: Peptide deformylase (170 aa).

Positions 94 and 136 each coordinate Fe cation. E137 is an active-site residue. Position 140 (H140) interacts with Fe cation.

The protein belongs to the polypeptide deformylase family. Fe(2+) is required as a cofactor.

It carries out the reaction N-terminal N-formyl-L-methionyl-[peptide] + H2O = N-terminal L-methionyl-[peptide] + formate. Removes the formyl group from the N-terminal Met of newly synthesized proteins. Requires at least a dipeptide for an efficient rate of reaction. N-terminal L-methionine is a prerequisite for activity but the enzyme has broad specificity at other positions. The protein is Peptide deformylase of Stenotrophomonas maltophilia (strain K279a).